Reading from the N-terminus, the 216-residue chain is DNA gyrase subunit B (216 aa).

A Toprim domain is found at 140 to 216 (SELYLVEGDS…PDKLRYHKII (77 aa)).

It belongs to the type II topoisomerase GyrB family. Heterotetramer, composed of two GyrA and two GyrB chains. In the heterotetramer, GyrA contains the active site tyrosine that forms a transient covalent intermediate with DNA, while GyrB binds cofactors and catalyzes ATP hydrolysis.

The protein localises to the cytoplasm. It catalyses the reaction ATP-dependent breakage, passage and rejoining of double-stranded DNA.. Its function is as follows. A type II topoisomerase that negatively supercoils closed circular double-stranded (ds) DNA in an ATP-dependent manner to modulate DNA topology and maintain chromosomes in an underwound state. Negative supercoiling favors strand separation, and DNA replication, transcription, recombination and repair, all of which involve strand separation. Also able to catalyze the interconversion of other topological isomers of dsDNA rings, including catenanes and knotted rings. Type II topoisomerases break and join 2 DNA strands simultaneously in an ATP-dependent manner. This is DNA gyrase subunit B (gyrB) from Acinetobacter venetianus (strain ATCC 31012 / DSM 23050 / BCRC 14357 / CCUG 45561 / CIP 110063 / KCTC 2702 / LMG 19082 / RAG-1).